Reading from the N-terminus, the 274-residue chain is Thiamine kinase (274 aa).

This sequence belongs to the thiamine kinase family.

It catalyses the reaction thiamine + ATP = thiamine phosphate + ADP + H(+). It participates in cofactor biosynthesis; thiamine diphosphate biosynthesis; thiamine phosphate from thiamine: step 1/1. Catalyzes the ATP-dependent phosphorylation of thiamine to thiamine phosphate. Is involved in thiamine salvage. This chain is Thiamine kinase, found in Salmonella heidelberg (strain SL476).